The chain runs to 638 residues: Growth hormone receptor (638 aa).

Positions 1 to 18 (MDLWQLLLTVALAGSSDA) are cleaved as a signal peptide. Residues 19 to 264 (FSGSEATPAT…SPFTCEEDFR (246 aa)) lie on the Extracellular side of the membrane. A disordered region spans residues 30–51 (GRASESVQRVHPGLGTNSSGKP). The N-linked (GlcNAc...) asparagine glycan is linked to N46. 2 cysteine pairs are disulfide-bonded: C56/C66 and C101/C112. A glycan (N-linked (GlcNAc...) asparagine) is linked at N115. C126 and C140 are disulfide-bonded. The region spanning 151–254 (PPIGLNWTLL…EVLYVTLPQM (104 aa)) is the Fibronectin type-III domain. N156, N161, and N200 each carry an N-linked (GlcNAc...) asparagine glycan. Positions 240 to 244 (YGEFS) match the WSXWS motif motif. A required for ADAM17-mediated proteolysis region spans residues 260–262 (EED). Residues 265-288 (FPWFLIIIFGIFGLTVMLFVFIFS) form a helical membrane-spanning segment. At 289–638 (KQQRIKMLIL…STDQLNKILP (350 aa)) the chain is on the cytoplasmic side. The segment at 294 to 379 (KMLILPPVPV…HQKSLSVLAA (86 aa)) is required for JAK2 binding. The Box 1 motif motif lies at 297–305 (ILPPVPVPK). Residues 340 to 349 (DSWVEFIELD) carry the UbE motif motif. S341 is modified (phosphoserine). At Y487 the chain carries Phosphotyrosine. The segment at 573–592 (TTTAERSGTAEDAPGSEMPV) is disordered. The residue at position 595 (Y595) is a Phosphotyrosine.

The protein belongs to the type I cytokine receptor family. Type 1 subfamily. In terms of assembly, on growth hormone (GH) binding, forms homodimers and binds JAK2 via a box 1-containing domain. The soluble form (GHBP) is produced by phorbol ester-promoted proteolytic cleavage at the cell surface (shedding) by ADAM17/TACE. Shedding is inhibited by growth hormone (GH) binding to the receptor probably due to a conformational change in GHR rendering the receptor inaccessible to ADAM17. Post-translationally, on GH binding, phosphorylated on tyrosine residues in the cytoplasmic domain by JAK2. In terms of processing, ubiquitinated by the ECS(SOCS2) complex following ligand-binding and phosphorylation by JAK2, leading to its degradation by the proteasome. Regulation by the ECS(SOCS2) complex acts as a negative feedback loop of growth hormone receptor signaling. Ubiquitination is not sufficient for GHR internalization.

It localises to the cell membrane. It is found in the secreted. Its function is as follows. Receptor for pituitary gland growth hormone involved in regulating postnatal body growth. On ligand binding, couples to, and activates the JAK2/STAT5 pathway. In terms of biological role, the soluble form acts as a reservoir of growth hormone in plasma and may be a modulator/inhibitor of GH signaling. The protein is Growth hormone receptor of Oryctolagus cuniculus (Rabbit).